Here is a 230-residue protein sequence, read N- to C-terminus: PKHD-type hydroxylase PD_1553 (230 aa).

A Fe2OG dioxygenase domain is found at 78–182; that stretch reads RTLPPRFNRY…RIASFFWVQS (105 aa). The Fe cation site is built by His-96, Asp-98, and His-163. 2-oxoglutarate is bound at residue Arg-173.

Fe(2+) is required as a cofactor. It depends on L-ascorbate as a cofactor.

The polypeptide is PKHD-type hydroxylase PD_1553 (Xylella fastidiosa (strain Temecula1 / ATCC 700964)).